The following is a 343-amino-acid chain: Glyceraldehyde-3-phosphate dehydrogenase (343 aa).

Residues S12–I13 and G114 contribute to the NAD(+) site. S143–N145 provides a ligand contact to D-glyceraldehyde 3-phosphate. The Nucleophile role is filled by C144. R172 serves as a coordination point for NAD(+). H198 to G199 lines the D-glyceraldehyde 3-phosphate pocket. Q307 contacts NAD(+).

Belongs to the glyceraldehyde-3-phosphate dehydrogenase family. Homotetramer.

Its subcellular location is the cytoplasm. It carries out the reaction D-glyceraldehyde 3-phosphate + phosphate + NADP(+) = (2R)-3-phospho-glyceroyl phosphate + NADPH + H(+). It catalyses the reaction D-glyceraldehyde 3-phosphate + phosphate + NAD(+) = (2R)-3-phospho-glyceroyl phosphate + NADH + H(+). It participates in carbohydrate degradation; glycolysis; pyruvate from D-glyceraldehyde 3-phosphate: step 1/5. The polypeptide is Glyceraldehyde-3-phosphate dehydrogenase (gap) (Methanocaldococcus jannaschii (strain ATCC 43067 / DSM 2661 / JAL-1 / JCM 10045 / NBRC 100440) (Methanococcus jannaschii)).